The chain runs to 303 residues: Thyrotroph embryonic factor (303 aa).

Disordered regions lie at residues 1–63 (MSDA…KLEE) and 132–176 (ESAS…DPNC). S32 bears the Phosphoserine mark. Basic and acidic residues predominate over residues 41 to 61 (KLMENPPREARLDKEKGKEKL). The segment covering 133-160 (SASSSTASPPSSSTAIFQPSETVSSTES) has biased composition (low complexity). Positions 233 to 296 (DEKYWTRRKK…GKCKTIVSKY (64 aa)) constitute a bZIP domain. The segment at 235–255 (KYWTRRKKNNVAAKRSRDARR) is basic motif. The leucine-zipper stretch occupies residues 256–263 (LKENQITI).

It belongs to the bZIP family. PAR subfamily. As to quaternary structure, binds DNA as a homodimer or a heterodimer. Can form a heterodimer with DBP.

The protein resides in the nucleus. Functionally, transcription factor that binds to and transactivates the TSHB promoter. Binds to a minimal DNA-binding sequence 5'-[TC][AG][AG]TTA[TC][AG]-3'. The chain is Thyrotroph embryonic factor (TEF) from Homo sapiens (Human).